Consider the following 158-residue polypeptide: Botcinic acid biosynthesis cluster B protein 16 (158 aa).

Its pathway is polyketide biosynthesis. Part of the gene cluster B that mediates the biosynthesis of botcinic acid and its botcinin derivatives, acetate-derived polyketides that contribute to virulence when combined with the sesquiterpene botrydial. Botcinic acid and its derivatives have been shown to induce chlorosis and necrosis during host plant infection, but also have antifungal activities. Two polyketide synthases, BOA6 and BOA9, are involved in the biosynthesis of botcinins. BOA6 mediates the formation of the per-methylated tetraketide core by condensation of four units of malonyl-CoA with one unit of acetyl-CoA, which would be methylated in activated methylene groups to yield a bicyclic acid intermediate that could then either be converted to botrylactone derivatives or lose the starter acetate unit through a retro-Claisen type C-C bond cleavage to yield botcinin derivatives. The second polyketide synthase, BOA9, is probably required for the biosynthesis of the tetraketide side chain of botcinins. The methyltransferase (MT) domain within BOA6 is probably responsible for the incorporation of four methyl groups. The trans-enoyl reductase BOA5 might take over the enoyl reductase function of BOA6 that misses an ER domain. The monooxygenases BOA2, BOA3 and BOA4 might be involved in further hydroxylations at C4, C5 and C8, whereas BOA7, close to BOA9, could potentially be involved in the hydroxylation at C4 in the side chain of botcinins. The chain is Botcinic acid biosynthesis cluster B protein 16 from Botryotinia fuckeliana (strain B05.10) (Noble rot fungus).